The chain runs to 733 residues: Two pore calcium channel protein 1 (733 aa).

Methionine 1 is modified (N-acetylmethionine). At methionine 1–aspartate 71 the chain is on the cytoplasmic side. Residues leucine 72–tryptophan 92 form a helical membrane-spanning segment. Residues cysteine 93–serine 120 are Vacuolar-facing. Residues isoleucine 121 to tyrosine 141 form a helical membrane-spanning segment. Over glutamate 142–alanine 158 the chain is Cytoplasmic. Residues cysteine 159 to phenylalanine 179 traverse the membrane as a helical segment. A topological domain (vacuolar) is located at residue aspartate 180. Residues phenylalanine 181–isoleucine 199 traverse the membrane as a helical; Voltage-sensor segment. The Cytoplasmic portion of the chain corresponds to arginine 200–asparagine 218. The helical transmembrane segment at isoleucine 219–glutamate 239 threads the bilayer. Residues aspartate 240 to leucine 245 lie on the Vacuolar side of the membrane. The pore-forming intramembrane region spans threonine 246–isoleucine 260. Topologically, residues leucine 261–serine 282 are vacuolar. A helical membrane pass occupies residues valine 283–valine 303. The Cytoplasmic segment spans residues valine 304–arginine 428. EF-hand domains are found at residues methionine 322–tyrosine 357 and isoleucine 363–arginine 398. Residues serine 429–valine 449 form a helical membrane-spanning segment. Residues glutamate 450–glutamine 465 lie on the Vacuolar side of the membrane. A helical membrane pass occupies residues valine 466–tyrosine 486. The Cytoplasmic portion of the chain corresponds to glycine 487–arginine 498. A helical membrane pass occupies residues phenylalanine 499–aspartate 519. At glutamate 520–glutamate 528 the chain is on the vacuolar side. Residues tryptophan 529 to methionine 546 form a helical; Voltage-sensor membrane-spanning segment. Residues asparagine 547–threonine 557 are Cytoplasmic-facing. A helical membrane pass occupies residues phenylalanine 558 to isoleucine 578. Residues tyrosine 579–aspartate 615 lie on the Vacuolar side of the membrane. The pore-forming intramembrane region spans tyrosine 616–glycine 630. Topologically, residues asparagine 631–tyrosine 651 are vacuolar. A helical membrane pass occupies residues phenylalanine 652–leucine 672. The Cytoplasmic portion of the chain corresponds to glutamate 673–threonine 733. Over residues lysine 686 to lysine 695 the composition is skewed to basic and acidic residues. A disordered region spans residues lysine 686 to valine 711.

It belongs to the calcium channel alpha-1 subunit (TC 1.A.1.11) family. Two pore calcium channel subfamily. As to quaternary structure, homodimer. As to expression, ubiquitously expressed.

Its subcellular location is the vacuole membrane. Its activity is regulated as follows. Inhibited by Al(3+). Functions as a voltage-gated inward-rectifying Ca(2+) channel (VDCC) across the vacuole membrane. Is one of the essential components of the slow vacuolar (SV) channel. Acts as the major ROS-responsive Ca(2+) channel and is the possible target of Al-dependent inhibition. Involved in the regulation of germination and stomatal movement. This Arabidopsis thaliana (Mouse-ear cress) protein is Two pore calcium channel protein 1 (TPC1).